A 431-amino-acid chain; its full sequence is Glucose-1-phosphate adenylyltransferase (431 aa).

Lysine 39 is a beta-D-fructose 1,6-bisphosphate binding site. AMP is bound by residues arginine 40, histidine 46, and arginine 52. Tyrosine 114 lines the alpha-D-glucose 1-phosphate pocket. Residue arginine 130 participates in AMP binding. Alpha-D-glucose 1-phosphate is bound by residues glycine 179, 194 to 195 (EK), and serine 212. AMP-binding residues include glutamate 370 and arginine 386. Beta-D-fructose 1,6-bisphosphate contacts are provided by residues 419-423 (REMLR) and 429-431 (QER).

The protein belongs to the bacterial/plant glucose-1-phosphate adenylyltransferase family. As to quaternary structure, homotetramer.

The catalysed reaction is alpha-D-glucose 1-phosphate + ATP + H(+) = ADP-alpha-D-glucose + diphosphate. It participates in glycan biosynthesis; glycogen biosynthesis. With respect to regulation, allosterically activated by fructose-1,6-bisphosphate (F16BP) and inhibited by AMP. Functionally, involved in the biosynthesis of ADP-glucose, a building block required for the elongation reactions to produce glycogen. Catalyzes the reaction between ATP and alpha-D-glucose 1-phosphate (G1P) to produce pyrophosphate and ADP-Glc. This Salmonella arizonae (strain ATCC BAA-731 / CDC346-86 / RSK2980) protein is Glucose-1-phosphate adenylyltransferase.